We begin with the raw amino-acid sequence, 228 residues long: Interferon-induced transmembrane protein 10 (228 aa).

Residues 1 to 154 (MREGKRGPPC…PDTTEVNDYY (154 aa)) are Extracellular-facing. A disordered region spans residues 29-49 (AQGPGQCPAPLGDPASTTDGA). A helical transmembrane segment spans residues 155 to 175 (LWSIFNFVYLNFCCLGFIALA). Residues cysteine 167 and cysteine 168 are each lipidated (S-palmitoyl cysteine). The Cytoplasmic segment spans residues 176-200 (YSLKVRDKKLLNDLNGAVEDAKTAR). The helical transmembrane segment at 201–221 (LFNITSSALAASCIILVFIFL) threads the bilayer. Residues 222-228 (RYPLTDY) are Extracellular-facing.

Belongs to the CD225/Dispanin family.

It is found in the cell membrane. The sequence is that of Interferon-induced transmembrane protein 10 (IFITM10) from Homo sapiens (Human).